A 290-amino-acid chain; its full sequence is UPF0761 membrane protein YihY (290 aa).

Helical transmembrane passes span 44–64, 104–124, 140–160, 183–203, 210–230, and 244–264; these read LLSLVPLVAVVFALFAAFPMF, VGACGLIVTALLLMYSIDSAL, FAVYWMILTLGPLLAGASLAI, IFPLLLSWISFWLLYSIVPTI, AIVGAFVAALLFEAGKKGFAL, and VLAVIPILFVWVYWTWCIVLL.

Belongs to the UPF0761 family.

The protein resides in the cell inner membrane. The polypeptide is UPF0761 membrane protein YihY (Escherichia coli O127:H6 (strain E2348/69 / EPEC)).